The primary structure comprises 104 residues: DET1- and DDB1-associated protein 1 (104 aa).

Positions 67 to 77 are enriched in basic and acidic residues; it reads KKNAAKKREQE. The disordered stretch occupies residues 67-104; that stretch reads KKNAAKKREQEQAEGEGGSPAPPRKIARTDSQEMNEDS.

Belongs to the DDA1 family. In terms of assembly, component of numerous DCX (DDB1-CUL4-X-box) E3 ubiquitin-protein ligase complexes which consist of a core of DDB1, cullin-4 (CUL4A or CUL4B), DDA1 and RBX1.

It functions in the pathway protein modification; protein ubiquitination. In terms of biological role, functions as a component of numerous distinct DCX (DDB1-CUL4-X-box) E3 ubiquitin-protein ligase complexes which mediate the ubiquitination and subsequent proteasomal degradation of target proteins. In the DCX complexes, acts as a scaffolding subunit required to stabilize the complex. The chain is DET1- and DDB1-associated protein 1 from Danio rerio (Zebrafish).